A 532-amino-acid polypeptide reads, in one-letter code: MRKLTKMSAMLLASGLILTGCGGNKGLEEKKENKQLTYTTVKDIGDMNPHVYGGSMSAESMIYEPLVRNTKDGIKPLLAKKWDVSEDGKTYTFHLRDDVKFHDGTTFDADAVKKNIDAVQQNKKLHSWLKISTLIDNVKVKDKYTVELNLKEAYQPALAELAMPRPYVFVSPKDFKNGTTKDGVKKFDGTGPFKLGEHKKDESADFNKNDQYWGEKSKLNKVQAKVMPAGETAFLSMKKGETNFAFTDDRGTDSLDKDSLKQLKDTGDYQVKRSQPMNTKMLVVNSGKKDNAVSDKTVRQAIGHMVNRDKIAKEILDGQEKPATQLFAKNVTDINFDMPTRKYDLKKAESLLDEAGWKKGKDSDVRQKDGKNLEMAMYYDKGSSSQKEQAEYLQAEFKKMGIKLNINGETSDKIAERRTSGDYDLMFNQTWGLLYDPQSTIAAFKAKNGYESATSGIENKDKIYNSIDDAFKIQNGKERSDAYKNILKQIDDEGIFIPISHGSMTVVAPKDLEKVSFTQSQYELPFNEMQYK.

Positions Met1–Gly20 are cleaved as a signal peptide. Cys21 carries N-palmitoyl cysteine lipidation. Residue Cys21 is the site of S-diacylglycerol cysteine attachment. 3 residues coordinate staphylopine: Arg165, Arg418, and Asn448.

It belongs to the bacterial solute-binding protein 5 family. The complex is composed of two ATP-binding proteins (CntD and CntF), two transmembrane proteins (CntB and CntC) and a solute-binding protein (CntA).

It is found in the cell membrane. In terms of biological role, part of the ABC transporter complex CntABCDF (Opp1) involved in the uptake of metal in complex with the metallophore staphylopine (StP). May be involved in the import of a large array of divalent metals ions such as nickel, cobalt, zinc, copper and iron. Binds the metal via the metallophore StP, and transfers the StP-metal complex to the membrane-bound permease. The sequence is that of Metal-staphylopine-binding protein CntA from Staphylococcus aureus (strain Mu50 / ATCC 700699).